Here is a 228-residue protein sequence, read N- to C-terminus: Cytochrome c oxidase subunit 2 (228 aa).

At 1 to 26 (MATWANLGLQNSSSPLMEQLNFFHDH) the chain is on the mitochondrial intermembrane side. A helical transmembrane segment spans residues 27-48 (TLLILIMITVMIAYIMFMLFFN). Residues 49–62 (KFTNRYLLHGQTIE) lie on the Mitochondrial matrix side of the membrane. The chain crosses the membrane as a helical span at residues 63-82 (IIWTILPAIILMFIAFPSLR). The Mitochondrial intermembrane portion of the chain corresponds to 83 to 228 (LLYLMDEINS…FIKWISSQMN (146 aa)). His161, Cys196, Glu198, Cys200, His204, and Met207 together coordinate Cu cation. A Mg(2+)-binding site is contributed by Glu198.

The protein belongs to the cytochrome c oxidase subunit 2 family. Component of the cytochrome c oxidase (complex IV, CIV), a multisubunit enzyme composed of a catalytic core of 3 subunits and several supernumerary subunits. The complex exists as a monomer or a dimer and forms supercomplexes (SCs) in the inner mitochondrial membrane with ubiquinol-cytochrome c oxidoreductase (cytochrome b-c1 complex, complex III, CIII). Cu cation serves as cofactor.

The protein localises to the mitochondrion inner membrane. The catalysed reaction is 4 Fe(II)-[cytochrome c] + O2 + 8 H(+)(in) = 4 Fe(III)-[cytochrome c] + 2 H2O + 4 H(+)(out). In terms of biological role, component of the cytochrome c oxidase, the last enzyme in the mitochondrial electron transport chain which drives oxidative phosphorylation. The respiratory chain contains 3 multisubunit complexes succinate dehydrogenase (complex II, CII), ubiquinol-cytochrome c oxidoreductase (cytochrome b-c1 complex, complex III, CIII) and cytochrome c oxidase (complex IV, CIV), that cooperate to transfer electrons derived from NADH and succinate to molecular oxygen, creating an electrochemical gradient over the inner membrane that drives transmembrane transport and the ATP synthase. Cytochrome c oxidase is the component of the respiratory chain that catalyzes the reduction of oxygen to water. Electrons originating from reduced cytochrome c in the intermembrane space (IMS) are transferred via the dinuclear copper A center (CU(A)) of subunit 2 and heme A of subunit 1 to the active site in subunit 1, a binuclear center (BNC) formed by heme A3 and copper B (CU(B)). The BNC reduces molecular oxygen to 2 water molecules using 4 electrons from cytochrome c in the IMS and 4 protons from the mitochondrial matrix. This is Cytochrome c oxidase subunit 2 (COII) from Aedes aegypti (Yellowfever mosquito).